A 518-amino-acid chain; its full sequence is MNFTKRPFLLTILDGWGYSPEVEGNAIHAANTPNLDDLLETYPNTLLSASGEDVGLPEGQMGNSEVGHLNIGAGRVVYQDLTRINRDIGNGDFFKNPVLKQAIENAKAQGSALHLMGLFSYGGVHSHMKHLRALIEFAKDEGITEIFIHAFLDGRDVSPRAALEDMKEHVEYCNNLSVGKIATVSGRYYAMDRDNRWDRTEDAYNAITRGDGVYYSKGPVDAISEGYGRGENDEFIKPTVIVDENGRPIGRMNENDTVIFFNFRPDRARQLTYAFVNDEFDNFERKSHPKVHFVCMTEYDEKLEVPIAFPSEELKNTLGEVLSKEGIKQLRIAETEKYAHVTFFFNGGVEKQNEGEERCLIPSPKVATYDLKPEMSAYEVTEELIERIGSGKYDVIVLNLANMDMVGHSGIMEAAVKAVEVVDDCVGKIITAIKEVGGEAMVMADHGNAEKMVEFCNNTERQCYTAHTSNPVRCIYVTQEKRVELQKGRLSDVAPTILKIMGIEKPPEMTGVPLIKNT.

Residues Asp-14 and Ser-64 each coordinate Mn(2+). The active-site Phosphoserine intermediate is Ser-64. Substrate-binding positions include His-125, 155-156, Arg-187, Arg-193, 264-267, and Lys-337; these read RD and RPDR. Residues Asp-404, His-408, Asp-445, His-446, and His-467 each coordinate Mn(2+).

It belongs to the BPG-independent phosphoglycerate mutase family. Mn(2+) is required as a cofactor.

It catalyses the reaction (2R)-2-phosphoglycerate = (2R)-3-phosphoglycerate. It participates in carbohydrate degradation; glycolysis; pyruvate from D-glyceraldehyde 3-phosphate: step 3/5. Functionally, catalyzes the interconversion of 2-phosphoglycerate and 3-phosphoglycerate. The polypeptide is 2,3-bisphosphoglycerate-independent phosphoglycerate mutase (Methanococcoides burtonii (strain DSM 6242 / NBRC 107633 / OCM 468 / ACE-M)).